The chain runs to 299 residues: pH-regulated antigen PRA1 (299 aa).

The N-terminal stretch at 1 to 15 (MNYLLFCLFFAFSVA) is a signal peptide. N-linked (GlcNAc...) asparagine glycosylation is found at Asn48, Asn89, Asn135, and Asn208. The segment at 253–299 (FEDSDSGSDSGASSTASSSHQHTDSNPSATTDANSHCHTHADGEVHC) is disordered. Low complexity predominate over residues 259-272 (GSDSGASSTASSSH). Residues 278–288 (NPSATTDANSH) are compositionally biased toward polar residues.

Belongs to the ZPS1 family. In terms of assembly, component of a multiprotein complex of 250 kDa composed of at least HYR1, MP65, and PRA1. Interacts with host Integrin alpha-M/beta-2 heterodimer. Also binds human factor H (CFH), CFHR1, plasminogen (PLG), complement C3, and C4BPA. Interacts with ZRT101. Post-translationally, N- and O-glycosylated. The N- and 0-glycosidically linked carbohydrates represent 18 to 20 percent and 3 to 4 percent, respectively, of the molecular mass of PRA1. 0-linked sugar residues may be involved in the interaction with fibrinogen. Contributes highly to the carbohydrate component of the matrix. Treatment with tunicamycin impairs glycosylation.

Its subcellular location is the secreted. Its function is as follows. Cell surface protein involved in the host-parasite interaction during candidal infection. With MP65, represents a major component of the biofilm matrix. As a surface protein, binds the two human complement regulators CFH and CFHR1, as well as plasminogen PLG, mediates complement evasion and extra-cellular matrix interaction and/or degradation. As a released protein, enhances complement control in direct vicinity of the yeast and thus generates an additional protective layer which controls host complement attack, assisting the fungus in escaping host surveillance. Binds to host fluid-phase C3 and blocks cleavage of C3 to C3a and C3b, leading to inhibition of complement activation and protection from uptake of C.albicans by human macrophages. Also mediates human complement control and complement evasion through binding to C4BPA, another human complement inhibitor, as well as through binding to host integrin alpha-M/beta-2. Binds zinc from its environment and then reassociates with ZRT1 to acquire this essential metal. This is pH-regulated antigen PRA1 from Candida albicans (strain SC5314 / ATCC MYA-2876) (Yeast).